Consider the following 333-residue polypeptide: Phosphate acyltransferase (333 aa).

It belongs to the PlsX family. In terms of assembly, homodimer. Probably interacts with PlsY.

It is found in the cytoplasm. The catalysed reaction is a fatty acyl-[ACP] + phosphate = an acyl phosphate + holo-[ACP]. It functions in the pathway lipid metabolism; phospholipid metabolism. In terms of biological role, catalyzes the reversible formation of acyl-phosphate (acyl-PO(4)) from acyl-[acyl-carrier-protein] (acyl-ACP). This enzyme utilizes acyl-ACP as fatty acyl donor, but not acyl-CoA. The chain is Phosphate acyltransferase from Clostridium beijerinckii (strain ATCC 51743 / NCIMB 8052) (Clostridium acetobutylicum).